The following is a 269-amino-acid chain: 2-dehydro-3-deoxyphosphooctonate aldolase (269 aa).

This sequence belongs to the KdsA family.

The protein resides in the cytoplasm. It carries out the reaction D-arabinose 5-phosphate + phosphoenolpyruvate + H2O = 3-deoxy-alpha-D-manno-2-octulosonate-8-phosphate + phosphate. It participates in carbohydrate biosynthesis; 3-deoxy-D-manno-octulosonate biosynthesis; 3-deoxy-D-manno-octulosonate from D-ribulose 5-phosphate: step 2/3. It functions in the pathway bacterial outer membrane biogenesis; lipopolysaccharide biosynthesis. In Chlamydia trachomatis serovar A (strain ATCC VR-571B / DSM 19440 / HAR-13), this protein is 2-dehydro-3-deoxyphosphooctonate aldolase.